Consider the following 401-residue polypeptide: Type I restriction enzyme EcoprrI specificity subunit (401 aa).

The protein belongs to the type-I restriction system S methylase family. In terms of assembly, the type I restriction/modification system is composed of three polypeptides R, M and S; the restriction enzyme has stoichiometry R(2)M(2)S(1) while the methyltransferase is M(2)S(1).

The specificity (S) subunit of a type I restriction enzyme; this subunit dictates DNA sequence specificity. The M and S subunits together form a methyltransferase (MTase) that methylates two adenine residues of the sequence 5'-CCAN(7)ATGC-3'. In the presence of the R subunit the complex can also act as an endonuclease, binding to the same target sequence but cutting the DNA some distance from this site. Whether the DNA is cut or modified depends on the methylation state of the target sequence. When the target site is unmodified, the DNA is cut. When the target site is hemimethylated, the complex acts as a maintenance MTase modifying the DNA so that both strands become methylated. After locating a non-methylated recognition site, the enzyme complex serves as a molecular motor that translocates DNA in an ATP-dependent manner until a collision occurs that triggers cleavage. This is Type I restriction enzyme EcoprrI specificity subunit (prrB) from Escherichia coli.